An 82-amino-acid chain; its full sequence is Cytochrome b-c1 complex subunit 8 (82 aa).

The Mitochondrial matrix portion of the chain corresponds to 1 to 39 (MGREFGNLTRMRHVISYSLSPFEQRAHPHVFTKGIPNVL). Ser-16 is subject to Phosphoserine. Residue Lys-33 is modified to N6-acetyllysine; alternate. Lys-33 carries the post-translational modification N6-succinyllysine; alternate. A helical transmembrane segment spans residues 40-68 (RRFRESFFRVAPQFVVFYLIYTWGTEEFE). Residues 69–82 (RSKRKNPAAYENDK) are Mitochondrial intermembrane-facing.

This sequence belongs to the UQCRQ/QCR8 family. Component of the ubiquinol-cytochrome c oxidoreductase (cytochrome b-c1 complex, complex III, CIII), a multisubunit enzyme composed of 11 subunits. The complex is composed of 3 respiratory subunits cytochrome b, cytochrome c1 and Rieske protein UQCRFS1, 2 core protein subunits UQCRC1/QCR1 and UQCRC2/QCR2, and 6 low-molecular weight protein subunits UQCRH/QCR6, UQCRB/QCR7, UQCRQ/QCR8, UQCR10/QCR9, UQCR11/QCR10 and subunit 9, the cleavage product of Rieske protein UQCRFS1. The complex exists as an obligatory dimer and forms supercomplexes (SCs) in the inner mitochondrial membrane with NADH-ubiquinone oxidoreductase (complex I, CI) and cytochrome c oxidase (complex IV, CIV), resulting in different assemblies (supercomplex SCI(1)III(2)IV(1) and megacomplex MCI(2)III(2)IV(2)). Interacts with UQCC6.

The protein resides in the mitochondrion inner membrane. Component of the ubiquinol-cytochrome c oxidoreductase, a multisubunit transmembrane complex that is part of the mitochondrial electron transport chain which drives oxidative phosphorylation. The respiratory chain contains 3 multisubunit complexes succinate dehydrogenase (complex II, CII), ubiquinol-cytochrome c oxidoreductase (cytochrome b-c1 complex, complex III, CIII) and cytochrome c oxidase (complex IV, CIV), that cooperate to transfer electrons derived from NADH and succinate to molecular oxygen, creating an electrochemical gradient over the inner membrane that drives transmembrane transport and the ATP synthase. The cytochrome b-c1 complex catalyzes electron transfer from ubiquinol to cytochrome c, linking this redox reaction to translocation of protons across the mitochondrial inner membrane, with protons being carried across the membrane as hydrogens on the quinol. In the process called Q cycle, 2 protons are consumed from the matrix, 4 protons are released into the intermembrane space and 2 electrons are passed to cytochrome c. This is Cytochrome b-c1 complex subunit 8 (UQCRQ) from Pongo abelii (Sumatran orangutan).